A 272-amino-acid chain; its full sequence is Putative pyruvate, phosphate dikinase regulatory protein (272 aa).

Residue Gly154 to Ser161 participates in ADP binding.

The protein belongs to the pyruvate, phosphate/water dikinase regulatory protein family. PDRP subfamily.

It catalyses the reaction N(tele)-phospho-L-histidyl/L-threonyl-[pyruvate, phosphate dikinase] + ADP = N(tele)-phospho-L-histidyl/O-phospho-L-threonyl-[pyruvate, phosphate dikinase] + AMP + H(+). The catalysed reaction is N(tele)-phospho-L-histidyl/O-phospho-L-threonyl-[pyruvate, phosphate dikinase] + phosphate + H(+) = N(tele)-phospho-L-histidyl/L-threonyl-[pyruvate, phosphate dikinase] + diphosphate. Functionally, bifunctional serine/threonine kinase and phosphorylase involved in the regulation of the pyruvate, phosphate dikinase (PPDK) by catalyzing its phosphorylation/dephosphorylation. The polypeptide is Putative pyruvate, phosphate dikinase regulatory protein (Wolbachia sp. subsp. Brugia malayi (strain TRS)).